Here is a 378-residue protein sequence, read N- to C-terminus: Chaperone protein DnaJ (378 aa).

The J domain maps to 5–69; that stretch reads EYYDRLGVSK…QKRAAYDQYG (65 aa). A CR-type zinc finger spans residues 134–216; that stretch reads GVEKEVSYNR…CHGTGHEKQA (83 aa). Cys-147, Cys-150, Cys-164, Cys-167, Cys-190, Cys-193, Cys-204, and Cys-207 together coordinate Zn(2+). CXXCXGXG motif repeat units follow at residues 147–154, 164–171, 190–197, and 204–211; these read CGTCLGSG, CRKCHGSG, CDICHGSG, and CQTCHGTG.

The protein belongs to the DnaJ family. As to quaternary structure, homodimer. It depends on Zn(2+) as a cofactor.

It is found in the cytoplasm. In terms of biological role, participates actively in the response to hyperosmotic and heat shock by preventing the aggregation of stress-denatured proteins and by disaggregating proteins, also in an autonomous, DnaK-independent fashion. Unfolded proteins bind initially to DnaJ; upon interaction with the DnaJ-bound protein, DnaK hydrolyzes its bound ATP, resulting in the formation of a stable complex. GrpE releases ADP from DnaK; ATP binding to DnaK triggers the release of the substrate protein, thus completing the reaction cycle. Several rounds of ATP-dependent interactions between DnaJ, DnaK and GrpE are required for fully efficient folding. Also involved, together with DnaK and GrpE, in the DNA replication of plasmids through activation of initiation proteins. The polypeptide is Chaperone protein DnaJ (Streptococcus pyogenes serotype M1).